A 142-amino-acid polypeptide reads, in one-letter code: MQAVPESRQQTFEEIYGPPENFLEIEVRNPQTHGTSRNMYTSYEIVCRTNIPAFKLKHSVVRRRYSDFEYFRDILERESTRVTIPPLPGKVFTNRFSDDVIEHRREGLQRFLQIVAGHPLLQTGSKVLASFIQDPNWDRNAW.

The PX domain maps to 21–138 (NFLEIEVRNP…ASFIQDPNWD (118 aa)). Residues R64, S66, K90, R95, and R104 each contribute to the a 1,2-diacyl-sn-glycero-3-phospho-(1D-myo-inositol-3-phosphate) site.

It belongs to the sorting nexin family.

The protein localises to the cytoplasm. It localises to the golgi apparatus membrane. The protein resides in the prevacuolar compartment membrane. Required for retention of late Golgi membrane proteins. Component of the retrieval machinery that functions by direct interaction with the cytosolic tails of certain TGN membrane proteins during the sorting/budding process at the prevacuolar compartment. Binds phosphatidylinositol 3-phosphate (PtdIns(P3)). The protein is Sorting nexin-3 (snx3) of Aspergillus fumigatus (strain ATCC MYA-4609 / CBS 101355 / FGSC A1100 / Af293) (Neosartorya fumigata).